A 417-amino-acid chain; its full sequence is Serine hydroxymethyltransferase (417 aa).

(6S)-5,6,7,8-tetrahydrofolate is bound by residues L121 and 125–127; that span reads GHL. K229 carries the post-translational modification N6-(pyridoxal phosphate)lysine. 355 to 357 provides a ligand contact to (6S)-5,6,7,8-tetrahydrofolate; that stretch reads SPF.

Belongs to the SHMT family. Homodimer. Pyridoxal 5'-phosphate is required as a cofactor.

The protein localises to the cytoplasm. It catalyses the reaction (6R)-5,10-methylene-5,6,7,8-tetrahydrofolate + glycine + H2O = (6S)-5,6,7,8-tetrahydrofolate + L-serine. It functions in the pathway one-carbon metabolism; tetrahydrofolate interconversion. It participates in amino-acid biosynthesis; glycine biosynthesis; glycine from L-serine: step 1/1. Functionally, catalyzes the reversible interconversion of serine and glycine with tetrahydrofolate (THF) serving as the one-carbon carrier. This reaction serves as the major source of one-carbon groups required for the biosynthesis of purines, thymidylate, methionine, and other important biomolecules. Also exhibits THF-independent aldolase activity toward beta-hydroxyamino acids, producing glycine and aldehydes, via a retro-aldol mechanism. The protein is Serine hydroxymethyltransferase of Proteus mirabilis (strain HI4320).